A 329-amino-acid polypeptide reads, in one-letter code: Ketol-acid reductoisomerase (NADP(+)) (329 aa).

In terms of domain architecture, KARI N-terminal Rossmann spans 2 to 182 (VEIYYDDDAS…GGTRAGALRT (181 aa)). NADP(+)-binding positions include 25–28 (YGSQ), S51, and S53. The active site involves H108. G134 serves as a coordination point for NADP(+). The KARI C-terminal knotted domain occupies 183 to 328 (TFTEETETDL…AKLRPMMSWI (146 aa)). D191, E195, E227, and E231 together coordinate Mg(2+). S252 provides a ligand contact to substrate.

The protein belongs to the ketol-acid reductoisomerase family. Requires Mg(2+) as cofactor.

The enzyme catalyses (2R)-2,3-dihydroxy-3-methylbutanoate + NADP(+) = (2S)-2-acetolactate + NADPH + H(+). It catalyses the reaction (2R,3R)-2,3-dihydroxy-3-methylpentanoate + NADP(+) = (S)-2-ethyl-2-hydroxy-3-oxobutanoate + NADPH + H(+). It participates in amino-acid biosynthesis; L-isoleucine biosynthesis; L-isoleucine from 2-oxobutanoate: step 2/4. The protein operates within amino-acid biosynthesis; L-valine biosynthesis; L-valine from pyruvate: step 2/4. Functionally, involved in the biosynthesis of branched-chain amino acids (BCAA). Catalyzes an alkyl-migration followed by a ketol-acid reduction of (S)-2-acetolactate (S2AL) to yield (R)-2,3-dihydroxy-isovalerate. In the isomerase reaction, S2AL is rearranged via a Mg-dependent methyl migration to produce 3-hydroxy-3-methyl-2-ketobutyrate (HMKB). In the reductase reaction, this 2-ketoacid undergoes a metal-dependent reduction by NADPH to yield (R)-2,3-dihydroxy-isovalerate. The polypeptide is Ketol-acid reductoisomerase (NADP(+)) (Frankia casuarinae (strain DSM 45818 / CECT 9043 / HFP020203 / CcI3)).